The sequence spans 293 residues: Ribosomal protein L11 methyltransferase (293 aa).

Positions 145, 166, 188, and 230 each coordinate S-adenosyl-L-methionine.

Belongs to the methyltransferase superfamily. PrmA family.

It is found in the cytoplasm. It carries out the reaction L-lysyl-[protein] + 3 S-adenosyl-L-methionine = N(6),N(6),N(6)-trimethyl-L-lysyl-[protein] + 3 S-adenosyl-L-homocysteine + 3 H(+). In terms of biological role, methylates ribosomal protein L11. The chain is Ribosomal protein L11 methyltransferase from Shigella sonnei (strain Ss046).